A 192-amino-acid polypeptide reads, in one-letter code: MSEYLLLLISTVLVNNFVLVKFLGLCPFMGVSSKLESAIGMSMATTFVLTLASILSYLVNQYLLLPFDLGYLRTMSFILVIAVVVQFTEMVVQKTSAALHRALGIYLPLITTNCAVLGVALLNVNEKHDFIQSAIYGFGAAVGFSLVLILFSAMRERLAAADVPMPFKGGAIAMITAGLMSLAFMGFTGLVK.

6 helical membrane passes run 5 to 25 (LLLL…FLGL), 39 to 59 (IGMS…SYLV), 65 to 85 (LPFD…AVVV), 102 to 122 (ALGI…VALL), 134 to 154 (AIYG…FSAM), and 171 to 191 (AIAM…TGLV).

It belongs to the NqrDE/RnfAE family. In terms of assembly, the complex is composed of six subunits: RnfA, RnfB, RnfC, RnfD, RnfE and RnfG.

It is found in the cell inner membrane. Functionally, part of a membrane-bound complex that couples electron transfer with translocation of ions across the membrane. This chain is Ion-translocating oxidoreductase complex subunit A, found in Shewanella sp. (strain MR-4).